The primary structure comprises 113 residues: Nucleoid-associated protein EUBREC_0329 (113 aa).

The segment covering 1–12 has biased composition (gly residues); it reads MARRGGFPGGMP. A disordered region spans residues 1-45; the sequence is MARRGGFPGGMPGNMNNLMKQAQKMQRQMEEAQKQLEDAEVTAKA. Over residues 27–37 the composition is skewed to basic and acidic residues; that stretch reads RQMEEAQKQLE.

Belongs to the YbaB/EbfC family. In terms of assembly, homodimer.

It localises to the cytoplasm. The protein resides in the nucleoid. Functionally, binds to DNA and alters its conformation. May be involved in regulation of gene expression, nucleoid organization and DNA protection. This is Nucleoid-associated protein EUBREC_0329 from Agathobacter rectalis (strain ATCC 33656 / DSM 3377 / JCM 17463 / KCTC 5835 / VPI 0990) (Eubacterium rectale).